Here is a 375-residue protein sequence, read N- to C-terminus: Sulfite efflux pump SSU1 (375 aa).

Topologically, residues 1–25 are cytoplasmic; it reads MPSGSGFHNIEEAGEKARKRDDWIA. The helical transmembrane segment at 26 to 46 threads the bilayer; the sequence is ISNFHPGWFSVNMGTGITAIL. At 47–59 the chain is on the extracellular side; it reads LQNLPYQFPGLHY. The helical transmembrane segment at 60 to 80 threads the bilayer; that stretch reads IAVVLFILNVIIFFLFLTISI. At 81 to 101 the chain is on the cytoplasmic side; the sequence is TRYCLWPDKFKAMLAHPAHSM. The helical transmembrane segment at 102–122 threads the bilayer; the sequence is LLGTFPMGFATIINCIVFICV. Residues 123-135 are Extracellular-facing; sequence PVWGEWASRFAWG. The chain crosses the membrane as a helical span at residues 136-156; it reads LWWIDAAVSVAICYFVPFMLM. The Cytoplasmic portion of the chain corresponds to 157–167; the sequence is TKHTSSLETMT. Residues 168–188 form a helical membrane-spanning segment; the sequence is AAWLLPIVAPVVAAASGGVVA. Over 189–200 the chain is Extracellular; sequence DSLQNDTHALIT. An N-linked (GlcNAc...) asparagine glycan is attached at Asn193. The helical transmembrane segment at 201–221 threads the bilayer; that stretch reads ILVCYAMWGSAVPLAMVILVI. At 222–234 the chain is on the cytoplasmic side; sequence YFQRLAIHKLVPR. Residues 235–255 form a helical membrane-spanning segment; it reads AAIVSALLPIGPLGQGGFGLM. Topologically, residues 256–277 are extracellular; the sequence is QLGVVAKRVFPRLDFLAPIAGD. The helical transmembrane segment at 278 to 298 threads the bilayer; sequence IFYVMGAFIAMIMWGFGLIWL. The Cytoplasmic portion of the chain corresponds to 299 to 309; the sequence is WFALASFTRGK. Residues 310–330 form a helical membrane-spanning segment; that stretch reads FYFNIGWWAFTFPLGVFTTAT. Residues 331-343 are Extracellular-facing; that stretch reads TQMGKEFNSPFFD. The chain crosses the membrane as a helical span at residues 344 to 364; it reads ILGTFFSIVVTCMWVLVFALT. Topologically, residues 365 to 375 are cytoplasmic; it reads VYKSCTKELFR.

Belongs to the tellurite-resistance/dicarboxylate transporter (TDT) family.

It is found in the cell membrane. In terms of biological role, sulphite efflux pump required for the secretion of sulphite as a reducing agent. In the presence of sulphite, cystine in keratin is directly cleaved to cysteine and S-sulphocysteine, and thereby, reduced proteins become accessible to hydrolysis by a variety of secreted endo- and exoproteases. Excretion of sulphite mediated by an efflux pump also represents a detoxification pathway for dermatophytes during infection of the epidermal stratum corneum, hair and nails, which are rich in cysteine. The protein is Sulfite efflux pump SSU1 (SSU1) of Trichophyton rubrum (Athlete's foot fungus).